The following is a 127-amino-acid chain: Spore germination protein 2 (127 aa).

The first 25 residues, 1–25, serve as a signal peptide directing secretion; the sequence is MNIRNSLILIISTILFFSIINGSLS. N-linked (GlcNAc...) asparagine glycosylation is found at N54 and N118.

It belongs to the Dictyostelium gerABC family.

It localises to the secreted. In Dictyostelium discoideum (Social amoeba), this protein is Spore germination protein 2 (gerB).